We begin with the raw amino-acid sequence, 888 residues long: Leucine--tRNA ligase (888 aa).

A 'HIGH' region motif is present at residues 43-53 (PYPSGRIHMGH). The 'KMSKS' region signature appears at 644 to 648 (KMSKS). Lysine 647 is a binding site for ATP.

This sequence belongs to the class-I aminoacyl-tRNA synthetase family.

The protein localises to the cytoplasm. The enzyme catalyses tRNA(Leu) + L-leucine + ATP = L-leucyl-tRNA(Leu) + AMP + diphosphate. This Rhodopseudomonas palustris (strain BisA53) protein is Leucine--tRNA ligase.